A 30-amino-acid chain; its full sequence is Thylakoid lumenal 13.3 kDa protein (30 aa).

Its subcellular location is the plastid. The protein resides in the chloroplast thylakoid lumen. The sequence is that of Thylakoid lumenal 13.3 kDa protein from Spinacia oleracea (Spinach).